The following is a 181-amino-acid chain: ADP-ribosylation factor 1 (181 aa).

Gly-2 carries the N-myristoyl glycine lipid modification. The interval 3 to 16 (NMFANLFKGLFGKK) is important for the stable binding to the membranes. GTP-binding positions include 24-32 (GLDAAGKTT), 126-129 (NKQD), and Ala-160.

The protein belongs to the small GTPase superfamily. Arf family.

It is found in the golgi apparatus membrane. It catalyses the reaction GTP + H2O = GDP + phosphate + H(+). Alternates between an inactive GDP-bound form and an active GTP-bound form. Activated by a guanine nucleotide-exchange factor (GEF) and inactivated by GTPase-activating protein (GAP). Its function is as follows. Small GTPase involved in protein trafficking between different compartments. Modulates vesicle budding and uncoating within the Golgi complex. In its GTP-bound form, triggers the recruitment of coatomer proteins to the Golgi membrane. The hydrolysis of ARF1-bound GTP, which is mediated by ARFGAPs proteins, is required for dissociation of coat proteins from Golgi membranes and vesicles. The chain is ADP-ribosylation factor 1 (arf1) from Xenopus laevis (African clawed frog).